Reading from the N-terminus, the 81-residue chain is Short neurotoxin 2 (81 aa).

Positions 1–21 (MKTLLLTLVVVTIVCLDLGYT) are cleaved as a signal peptide. 4 disulfide bridges follow: Cys24–Cys43, Cys38–Cys60, Cys62–Cys73, and Cys74–Cys79.

This sequence belongs to the three-finger toxin family. Short-chain subfamily. Type I alpha-neurotoxin sub-subfamily. In terms of tissue distribution, expressed by the venom gland.

The protein localises to the secreted. Binds to muscle nicotinic acetylcholine receptor (nAChR) and inhibit acetylcholine from binding to the receptor, thereby impairing neuromuscular transmission. In Cryptophis nigrescens (Eastern small-eyed snake), this protein is Short neurotoxin 2.